A 130-amino-acid polypeptide reads, in one-letter code: DNA-directed RNA polymerase subunit omega (130 aa).

The tract at residues 80–130 (PEPDTVPLIGSAGASVDADDTEVAPERMTEEELLKGLEGLAPPEEQPEEDE) is disordered. Residues 103 to 114 (APERMTEEELLK) show a composition bias toward basic and acidic residues.

It belongs to the RNA polymerase subunit omega family. As to quaternary structure, the RNAP catalytic core consists of 2 alpha, 1 beta, 1 beta' and 1 omega subunit. When a sigma factor is associated with the core the holoenzyme is formed, which can initiate transcription.

It carries out the reaction RNA(n) + a ribonucleoside 5'-triphosphate = RNA(n+1) + diphosphate. In terms of biological role, promotes RNA polymerase assembly. Latches the N- and C-terminal regions of the beta' subunit thereby facilitating its interaction with the beta and alpha subunits. This is DNA-directed RNA polymerase subunit omega from Rhodopseudomonas palustris (strain BisB18).